Here is a 707-residue protein sequence, read N- to C-terminus: Choline transporter-like protein 4 (707 aa).

The Cytoplasmic segment spans residues 1 to 32 (MGRKQNENEAHGNSAKYDPSFRGPIKNRGCTD). A helical transmembrane segment spans residues 33–53 (IICCVLFLIFILGYIIVGLVA). The Extracellular portion of the chain corresponds to 54 to 227 (WVYGDPRQVL…KIFEDFAQSW (174 aa)). 4 N-linked (GlcNAc...) asparagine glycosylation sites follow: Asn-67, Asn-185, Asn-195, and Asn-196. The helical transmembrane segment at 228–248 (YWILVALGVALALSLLFILLL) threads the bilayer. At 249-250 (RL) the chain is on the cytoplasmic side. The helical transmembrane segment at 251 to 271 (VAAPLVLLLIVGVLAVLAYGI) threads the bilayer. Over 272 to 307 (YHCWQQYQVFRDKGASITQLGFTTNFSAYQSVKETW) the chain is Extracellular. A glycan (N-linked (GlcNAc...) asparagine) is linked at Asn-296. The chain crosses the membrane as a helical span at residues 308–328 (LAALIVLAVLEGILLLMLIFL). The Cytoplasmic segment spans residues 329 to 356 (RQRIRIAIALLKEASRAVGQMMSTMFYP). A helical membrane pass occupies residues 357–377 (LVTFVLLVICIGYWAVTALYL). The Extracellular portion of the chain corresponds to 378 to 452 (ATSGQPQYIY…GVLGLFWTVN (75 aa)). Residues Asn-391, Asn-403, and Asn-413 are each glycosylated (N-linked (GlcNAc...) asparagine). The helical transmembrane segment at 453 to 473 (WVLALGQCVLAGAFASFYWAF) threads the bilayer. At 474–498 (HKPRDIPTFPLSSAFIRTLRYHTGS) the chain is on the cytoplasmic side. The chain crosses the membrane as a helical span at residues 499-519 (LAFGALILSLVQIARVILEYI). Over 520–557 (DHKLRGSQNPVARCIICCFKCCLWCLEKFIKFLNRNAY) the chain is Extracellular. The chain crosses the membrane as a helical span at residues 558–578 (IMIAIYGKNFCVSAKNAFMLL). Residues 579-594 (MRNVLRVVVLDKVTDL) lie on the Cytoplasmic side of the membrane. Residues 595-615 (LLFFGKLLVVGGVGVLSFFFF) traverse the membrane as a helical segment. Over 616 to 635 (SGRIKGLGKDFENPNLNYYW) the chain is Extracellular. Residues 636–656 (LPIMTSIMGAYVIASGFFSVF) traverse the membrane as a helical segment. At 657 to 707 (GMCVDTLFLCFLEDLERNDGSQERPYYMPKALLKILGKKNEAPTGGKTRKK) the chain is on the cytoplasmic side.

The protein belongs to the CTL (choline transporter-like) family. Post-translationally, N-glycosylated; N-glycosylation of Asn-67 and Asn-391 is required for a proper thiamine pyrophosphate uptake. Expressed in colon and cecum.

The protein resides in the membrane. It is found in the apical cell membrane. It catalyses the reaction choline(out) + n H(+)(in) = choline(in) + n H(+)(out). The catalysed reaction is thiamine diphosphate(out) = thiamine diphosphate(in). In terms of biological role, choline transporter that plays a role in the choline-acetylcholine system and is required to the efferent innervation of hair cells in the olivocochlear bundle for the maintenance of physiological function of outer hair cells and the protection of hair cells from acoustic injury. Also described as a thiamine pyrophosphate transporter in colon, may mediate the absorption of microbiota-generated thiamine pyrophosphate and contribute to host thiamine (vitamin B1) homeostasis. The protein is Choline transporter-like protein 4 of Mus musculus (Mouse).